The sequence spans 387 residues: ATP phosphoribosyltransferase regulatory subunit (387 aa).

It belongs to the class-II aminoacyl-tRNA synthetase family. HisZ subfamily. As to quaternary structure, heteromultimer composed of HisG and HisZ subunits.

It is found in the cytoplasm. It participates in amino-acid biosynthesis; L-histidine biosynthesis; L-histidine from 5-phospho-alpha-D-ribose 1-diphosphate: step 1/9. Required for the first step of histidine biosynthesis. May allow the feedback regulation of ATP phosphoribosyltransferase activity by histidine. This chain is ATP phosphoribosyltransferase regulatory subunit, found in Psychrobacter cryohalolentis (strain ATCC BAA-1226 / DSM 17306 / VKM B-2378 / K5).